We begin with the raw amino-acid sequence, 92 residues long: Small ribosomal subunit protein uS19c (92 aa).

It belongs to the universal ribosomal protein uS19 family.

The protein resides in the plastid. It localises to the chloroplast. Its function is as follows. Protein S19 forms a complex with S13 that binds strongly to the 16S ribosomal RNA. This Guillardia theta (Cryptophyte) protein is Small ribosomal subunit protein uS19c (rps19).